The following is a 185-amino-acid chain: Threonylcarbamoyl-AMP synthase (185 aa).

The region spanning 1 to 185 is the YrdC-like domain; it reads MKNFEQVLKA…AKTSQILRQG (185 aa). The interval 163–185 is disordered; the sequence is ETSGRNKPSEIRDAKTSQILRQG. Residues 164 to 177 are compositionally biased toward basic and acidic residues; sequence TSGRNKPSEIRDAK.

This sequence belongs to the SUA5 family. TsaC subfamily.

The protein localises to the cytoplasm. The enzyme catalyses L-threonine + hydrogencarbonate + ATP = L-threonylcarbamoyladenylate + diphosphate + H2O. Required for the formation of a threonylcarbamoyl group on adenosine at position 37 (t(6)A37) in tRNAs that read codons beginning with adenine. Catalyzes the conversion of L-threonine, HCO(3)(-)/CO(2) and ATP to give threonylcarbamoyl-AMP (TC-AMP) as the acyladenylate intermediate, with the release of diphosphate. In Vibrio campbellii (strain ATCC BAA-1116), this protein is Threonylcarbamoyl-AMP synthase.